The primary structure comprises 128 residues: Sulfurtransferase TusD (128 aa).

C78 serves as the catalytic Cysteine persulfide intermediate.

This sequence belongs to the DsrE/TusD family. Heterohexamer, formed by a dimer of trimers. The hexameric TusBCD complex contains 2 copies each of TusB, TusC and TusD. The TusBCD complex interacts with TusE.

Its subcellular location is the cytoplasm. Functionally, part of a sulfur-relay system required for 2-thiolation of 5-methylaminomethyl-2-thiouridine (mnm(5)s(2)U) at tRNA wobble positions. Accepts sulfur from TusA and transfers it in turn to TusE. The sequence is that of Sulfurtransferase TusD from Escherichia coli (strain 55989 / EAEC).